Here is a 408-residue protein sequence, read N- to C-terminus: uncharacterized protein (408 aa).

12 helical membrane-spanning segments follow: residues W9–F29, V49–I69, I77–N97, V100–T120, L135–W155, T167–M187, L216–A236, G252–S272, S283–I303, L308–T328, L340–V360, and Y373–V393.

Belongs to the major facilitator superfamily.

It localises to the cell membrane. This is an uncharacterized protein from Bacillus subtilis (strain 168).